Reading from the N-terminus, the 270-residue chain is Ethanolamine ammonia-lyase small subunit (270 aa).

Adenosylcob(III)alamin-binding residues include valine 161, glutamate 182, and cysteine 211.

It belongs to the EutC family. In terms of assembly, the basic unit is a heterodimer which dimerizes to form tetramers. The heterotetramers trimerize; 6 large subunits form a core ring with 6 small subunits projecting outwards. Requires adenosylcob(III)alamin as cofactor.

Its subcellular location is the bacterial microcompartment. It catalyses the reaction ethanolamine = acetaldehyde + NH4(+). The protein operates within amine and polyamine degradation; ethanolamine degradation. Catalyzes the deamination of various vicinal amino-alcohols to oxo compounds. Allows this organism to utilize ethanolamine as the sole source of nitrogen and carbon in the presence of external vitamin B12. The chain is Ethanolamine ammonia-lyase small subunit from Azotobacter vinelandii (strain DJ / ATCC BAA-1303).